Reading from the N-terminus, the 86-residue chain is Putative defensin-like protein 9 (86 aa).

Positions Met1 to Gly29 are cleaved as a signal peptide. Gln30 is subject to Pyrrolidone carboxylic acid. Disulfide bonds link Cys34-Cys79, Cys45-Cys65, Cys51-Cys73, and Cys55-Cys75.

It belongs to the DEFL family.

Its subcellular location is the secreted. This is Putative defensin-like protein 9 (LCR76) from Arabidopsis thaliana (Mouse-ear cress).